The primary structure comprises 563 residues: Chitinase A (563 aa).

An N-terminal signal peptide occupies residues 1–23 (MRKFNKPLLALLIGSTLCSAAQA). In terms of domain architecture, GH18 spans 158-559 (KVVGSYFVEW…NSMNASLGNS (402 aa)). The Proton donor role is filled by glutamate 315.

This sequence belongs to the glycosyl hydrolase 18 family. Chitinase class II subfamily.

It carries out the reaction Random endo-hydrolysis of N-acetyl-beta-D-glucosaminide (1-&gt;4)-beta-linkages in chitin and chitodextrins.. In Serratia marcescens, this protein is Chitinase A (chiA).